We begin with the raw amino-acid sequence, 947 residues long: Bifunctional glutamine synthetase adenylyltransferase/adenylyl-removing enzyme (947 aa).

The segment at 1 to 440 (MTPLSSPLSQ…VFNELIGDDE (440 aa)) is adenylyl removase. The tract at residues 450–947 (SEPWREVWQD…ASWRKWLVAV (498 aa)) is adenylyl transferase.

This sequence belongs to the GlnE family. The cofactor is Mg(2+).

It catalyses the reaction [glutamine synthetase]-O(4)-(5'-adenylyl)-L-tyrosine + phosphate = [glutamine synthetase]-L-tyrosine + ADP. The enzyme catalyses [glutamine synthetase]-L-tyrosine + ATP = [glutamine synthetase]-O(4)-(5'-adenylyl)-L-tyrosine + diphosphate. Functionally, involved in the regulation of glutamine synthetase GlnA, a key enzyme in the process to assimilate ammonia. When cellular nitrogen levels are high, the C-terminal adenylyl transferase (AT) inactivates GlnA by covalent transfer of an adenylyl group from ATP to specific tyrosine residue of GlnA, thus reducing its activity. Conversely, when nitrogen levels are low, the N-terminal adenylyl removase (AR) activates GlnA by removing the adenylyl group by phosphorolysis, increasing its activity. The regulatory region of GlnE binds the signal transduction protein PII (GlnB) which indicates the nitrogen status of the cell. The sequence is that of Bifunctional glutamine synthetase adenylyltransferase/adenylyl-removing enzyme from Salmonella paratyphi A (strain ATCC 9150 / SARB42).